The primary structure comprises 639 residues: Protein phosphatase EYA4 (639 aa).

Met-1 carries the N-acetylmethionine modification. 3 disordered regions span residues 1–72, 210–232, and 300–368; these read MEDS…GGEN, QTQSPLQSGCLSYSPGFSTPQPG, and ADGT…DSDL. Residue Lys-14 forms a Glycyl lysine isopeptide (Lys-Gly) (interchain with G-Cter in SUMO2) linkage. Positions 18 to 30 are enriched in polar residues; that stretch reads ESDVSQSQNSRSM. Lys-52 is covalently cross-linked (Glycyl lysine isopeptide (Lys-Gly) (interchain with G-Cter in SUMO2)). The segment covering 56–66 has biased composition (low complexity); it reads SNLSSTSVTTN. The segment covering 300–334 has biased composition (polar residues); the sequence is ADGTPSSTSTYQLQESLPGLTNQPGEFDTMQSPST. Position 361 is a phosphoserine (Ser-361). The active-site Nucleophile is Asp-375. Residues Asp-375, Asp-377, and Asp-603 each contribute to the Mg(2+) site. Catalysis depends on Asp-377, which acts as the Proton donor.

Belongs to the HAD-like hydrolase superfamily. EYA family. As to quaternary structure, interacts with SIX3; translocates EYA4 from the cytoplasm to the nucleus and promotes activation of their target genes. Requires Mg(2+) as cofactor. Highly expressed in heart and skeletal muscle.

The protein resides in the cytoplasm. It localises to the nucleus. It carries out the reaction O-phospho-L-tyrosyl-[protein] + H2O = L-tyrosyl-[protein] + phosphate. Its function is as follows. Tyrosine phosphatase that specifically dephosphorylates 'Tyr-142' of histone H2AX (H2AXY142ph). 'Tyr-142' phosphorylation of histone H2AX plays a central role in DNA repair and acts as a mark that distinguishes between apoptotic and repair responses to genotoxic stress. Promotes efficient DNA repair by dephosphorylating H2AX, promoting the recruitment of DNA repair complexes containing MDC1. Its function as histone phosphatase probably explains its role in transcription regulation during organogenesis. May be involved in development of the eye. The polypeptide is Protein phosphatase EYA4 (EYA4) (Homo sapiens (Human)).